Here is a 497-residue protein sequence, read N- to C-terminus: MEIVIRTGSGDVRGSKENGIAVFRGIPYAEPPVGAHRFTAPRPPRPWDGVRDATEFSATAPRPPYPEAIGALLIERFIPGDDYLTLNVWTPDPNAVGLPVMVWIHGGAFTNGSGSEPVYDGAAFARDGVVFVSFNYRLGIIGFADLPDAPSNRGLLDQIAALEWVRDNIARFGGDPGNVTVFGESAGAMSVCTLMATPRARGLFRRAILQSGAGNMAVAAEDATTIAAVIAHRLGVEPTAAALAHVPVAQLLDVQQQVAQEIQGAPDPAVWGERIAGGSVLLPFAPVIDGELLSQRPAEAIAGGAGHDVDLLFGTTTDEYRLFLAPTGLLPFITSDYVTAHLAKSGLDADAAKAYTAEGRGEEPGDILASIITDQVFRIPALRIAESRVDAPARTFGYEFAWRTPQLDGILGACHAVELPFVFRTLDRAASLVGTNPPEELAETVHNAWVRFATSGDPGWPAWNPETRSVMRFDHPVSEMVTDPYPATRALWDGVPL.

Ser-185 functions as the Acyl-ester intermediate in the catalytic mechanism. Residues Glu-319 and His-415 each act as charge relay system in the active site.

It belongs to the type-B carboxylesterase/lipase family.

It localises to the secreted. The catalysed reaction is a carboxylic ester + H2O = an alcohol + a carboxylate + H(+). This Thermobifida fusca (Thermomonospora fusca) protein is Carboxylesterase.